The chain runs to 201 residues: Potassium-transporting ATPase KdpC subunit (201 aa).

The chain crosses the membrane as a helical span at residues 7 to 27; sequence PAIVLLLVLTAITGLAYPLAM.

It belongs to the KdpC family. As to quaternary structure, the system is composed of three essential subunits: KdpA, KdpB and KdpC.

The protein localises to the cell inner membrane. In terms of biological role, part of the high-affinity ATP-driven potassium transport (or Kdp) system, which catalyzes the hydrolysis of ATP coupled with the electrogenic transport of potassium into the cytoplasm. This subunit acts as a catalytic chaperone that increases the ATP-binding affinity of the ATP-hydrolyzing subunit KdpB by the formation of a transient KdpB/KdpC/ATP ternary complex. The protein is Potassium-transporting ATPase KdpC subunit of Bradyrhizobium diazoefficiens (strain JCM 10833 / BCRC 13528 / IAM 13628 / NBRC 14792 / USDA 110).